A 251-amino-acid polypeptide reads, in one-letter code: Ditrans,polycis-undecaprenyl-diphosphate synthase ((2E,6E)-farnesyl-diphosphate specific) (251 aa).

Residue D26 is part of the active site. D26 lines the Mg(2+) pocket. Substrate contacts are provided by residues 27-30 (GNGR), W31, R39, H43, and 71-73 (SSE). N74 functions as the Proton acceptor in the catalytic mechanism. Substrate contacts are provided by residues W75, R77, R194, and 200–202 (RIS). E213 serves as a coordination point for Mg(2+).

This sequence belongs to the UPP synthase family. Homodimer. Mg(2+) serves as cofactor.

It carries out the reaction 8 isopentenyl diphosphate + (2E,6E)-farnesyl diphosphate = di-trans,octa-cis-undecaprenyl diphosphate + 8 diphosphate. Catalyzes the sequential condensation of isopentenyl diphosphate (IPP) with (2E,6E)-farnesyl diphosphate (E,E-FPP) to yield (2Z,6Z,10Z,14Z,18Z,22Z,26Z,30Z,34E,38E)-undecaprenyl diphosphate (di-trans,octa-cis-UPP). UPP is the precursor of glycosyl carrier lipid in the biosynthesis of bacterial cell wall polysaccharide components such as peptidoglycan and lipopolysaccharide. This chain is Ditrans,polycis-undecaprenyl-diphosphate synthase ((2E,6E)-farnesyl-diphosphate specific), found in Buchnera aphidicola subsp. Acyrthosiphon pisum (strain APS) (Acyrthosiphon pisum symbiotic bacterium).